A 139-amino-acid chain; its full sequence is MSYCRQEGKDRIIFVTKEDHETPSSAELVADDPNDPYEEHGLILPNGDINWNCPCLGGMASGPCGEQFKSAFSCFHYSTEDIKGSDCIDQFRAMQECMQKYPDLYPQDEEEEEEAKPVEPVEETADTKVSAAKEQGTSS.

Cystine bridges form between C53–C55, C64–C97, and C74–C87. The 45-residue stretch at 61-105 folds into the CHCH domain; it reads SGPCGEQFKSAFSCFHYSTEDIKGSDCIDQFRAMQECMQKYPDLY. Short sequence motifs (cx9C motif) lie at residues 64–74 and 87–97; these read CGEQFKSAFSC and CIDQFRAMQEC. Residues 102–139 are disordered; the sequence is PDLYPQDEEEEEEAKPVEPVEETADTKVSAAKEQGTSS. Residues 106–124 are compositionally biased toward acidic residues; the sequence is PQDEEEEEEAKPVEPVEET.

Monomer. Can form homooligomers. Interacts with GFER and forms transient disulfide bonds with GFER. Interacts with MICU1. Interacts with COX19 forming transient intermolecular disulfide bridges. Interacts with COA7 through transient intermolecular disulfide bonds. Interacts with AIFM1; the interaction increases in presence of NADH. Interacts with NDUFB10. In terms of processing, forms intrachain disulfide bridges, but exists in different redox states. As to expression, widely expressed. Present at high level in liver and kidney, followed by lung, brain, heart and spleen (at protein level).

Its subcellular location is the mitochondrion intermembrane space. Central component of a redox-sensitive mitochondrial intermembrane space import machinery which is required for the biogenesis of respiratory chain complexes. Functions as chaperone and catalyzes the formation of disulfide bonds in substrate proteins, such as COX17, COX19, MICU1 and COA7. Required for the import and folding of small cysteine-containing proteins (small Tim) in the mitochondrial intermembrane space (IMS). Required for the import of COA7 in the IMS. Precursor proteins to be imported into the IMS are translocated in their reduced form into the mitochondria. The oxidized form of CHCHD4/MIA40 forms a transient intermolecular disulfide bridge with the reduced precursor protein, resulting in oxidation of the precursor protein that now contains an intramolecular disulfide bond and is able to undergo folding in the IMS. Reduced CHCHD4/MIA40 is then reoxidized by GFER/ERV1 via a disulfide relay system. Mediates formation of disulfide bond in MICU1 in the IMS, promoting formation of the MICU1-MICU2 heterodimer that regulates mitochondrial calcium uptake. This chain is Mitochondrial intermembrane space import and assembly protein 40 (Chchd4), found in Mus musculus (Mouse).